Reading from the N-terminus, the 208-residue chain is Putative 3-methyladenine DNA glycosylase (208 aa).

This sequence belongs to the DNA glycosylase MPG family.

The sequence is that of Putative 3-methyladenine DNA glycosylase from Lactobacillus delbrueckii subsp. bulgaricus (strain ATCC BAA-365 / Lb-18).